We begin with the raw amino-acid sequence, 605 residues long: Proline--tRNA ligase (605 aa).

It belongs to the class-II aminoacyl-tRNA synthetase family. ProS type 1 subfamily. As to quaternary structure, homodimer.

Its subcellular location is the cytoplasm. The enzyme catalyses tRNA(Pro) + L-proline + ATP = L-prolyl-tRNA(Pro) + AMP + diphosphate. In terms of biological role, catalyzes the attachment of proline to tRNA(Pro) in a two-step reaction: proline is first activated by ATP to form Pro-AMP and then transferred to the acceptor end of tRNA(Pro). As ProRS can inadvertently accommodate and process non-cognate amino acids such as alanine and cysteine, to avoid such errors it has two additional distinct editing activities against alanine. One activity is designated as 'pretransfer' editing and involves the tRNA(Pro)-independent hydrolysis of activated Ala-AMP. The other activity is designated 'posttransfer' editing and involves deacylation of mischarged Ala-tRNA(Pro). The misacylated Cys-tRNA(Pro) is not edited by ProRS. This is Proline--tRNA ligase from Bifidobacterium adolescentis (strain ATCC 15703 / DSM 20083 / NCTC 11814 / E194a).